The primary structure comprises 220 residues: Deoxyribose-phosphate aldolase (220 aa).

D89 (proton donor/acceptor) is an active-site residue. The Schiff-base intermediate with acetaldehyde role is filled by K151. The active-site Proton donor/acceptor is K180.

This sequence belongs to the DeoC/FbaB aldolase family. DeoC type 1 subfamily.

The protein localises to the cytoplasm. The enzyme catalyses 2-deoxy-D-ribose 5-phosphate = D-glyceraldehyde 3-phosphate + acetaldehyde. It functions in the pathway carbohydrate degradation; 2-deoxy-D-ribose 1-phosphate degradation; D-glyceraldehyde 3-phosphate and acetaldehyde from 2-deoxy-alpha-D-ribose 1-phosphate: step 2/2. Functionally, catalyzes a reversible aldol reaction between acetaldehyde and D-glyceraldehyde 3-phosphate to generate 2-deoxy-D-ribose 5-phosphate. The polypeptide is Deoxyribose-phosphate aldolase (Streptococcus pneumoniae (strain Hungary19A-6)).